The sequence spans 77 residues: Conotoxin VnMEKL-0223 (77 aa).

The first 19 residues, 1–19 (MQKLTILLLVAAVLMSTQA), serve as a signal peptide directing secretion. Residues 20 to 37 (LIKGGGEKRPKEKIKFLS) constitute a propeptide that is removed on maturation. Cystine bridges form between Cys-51–Cys-65, Cys-58–Cys-69, and Cys-64–Cys-74.

Belongs to the conotoxin O2 superfamily. As to expression, expressed by the venom duct.

Its subcellular location is the secreted. The sequence is that of Conotoxin VnMEKL-0223 from Conus ventricosus (Mediterranean cone).